A 352-amino-acid polypeptide reads, in one-letter code: Fc receptor-like A (352 aa).

The N-terminal stretch at 1-30 (MKLSCTLTQWALYVCPAVLLATQMLLAASS) is a signal peptide. A disordered region spans residues 46–65 (CQAAAEEDEGDEDDGDMTQS). The segment covering 50-61 (AEEDEGDEDDGD) has biased composition (acidic residues). Ig-like C2-type domains lie at 80–169 (PFHL…EAAS) and 182–260 (PVLK…RQIS). Intrachain disulfides connect Cys109-Cys153 and Cys202-Cys250. The segment at 275-310 (KPTASETPPTEALGPLPPPPASSAEQPRFSSPDPHL) is disordered.

As to quaternary structure, monomer or homodimer; disulfide-linked. Highly expressed in spleen. Expressed in immature B-cell and B-cell lines.

The protein localises to the cytoplasm. Its function is as follows. May be implicated in B-cell differentiation and lymphomagenesis. This is Fc receptor-like A (Fcrla) from Mus musculus (Mouse).